Reading from the N-terminus, the 261-residue chain is Imidazole glycerol phosphate synthase subunit HisF (261 aa).

Catalysis depends on residues Asp-11 and Asp-130.

It belongs to the HisA/HisF family. As to quaternary structure, heterodimer of HisH and HisF.

It is found in the cytoplasm. It catalyses the reaction 5-[(5-phospho-1-deoxy-D-ribulos-1-ylimino)methylamino]-1-(5-phospho-beta-D-ribosyl)imidazole-4-carboxamide + L-glutamine = D-erythro-1-(imidazol-4-yl)glycerol 3-phosphate + 5-amino-1-(5-phospho-beta-D-ribosyl)imidazole-4-carboxamide + L-glutamate + H(+). It functions in the pathway amino-acid biosynthesis; L-histidine biosynthesis; L-histidine from 5-phospho-alpha-D-ribose 1-diphosphate: step 5/9. Its function is as follows. IGPS catalyzes the conversion of PRFAR and glutamine to IGP, AICAR and glutamate. The HisF subunit catalyzes the cyclization activity that produces IGP and AICAR from PRFAR using the ammonia provided by the HisH subunit. This Limosilactobacillus fermentum (strain NBRC 3956 / LMG 18251) (Lactobacillus fermentum) protein is Imidazole glycerol phosphate synthase subunit HisF.